The following is a 131-amino-acid chain: MSREFKRSDRVAQELQKEIAVILQREVKDPRIGMVTVSDVEVSRDLAYAKIFVTFLFNNDDEAIKQGMKALEKAAPYIRSLVGKAMRLRIVPELRFEYDRSLVEGMRMSNLVTNVVRSDKERHIDEENGED.

Belongs to the RbfA family. As to quaternary structure, monomer. Binds 30S ribosomal subunits, but not 50S ribosomal subunits or 70S ribosomes.

It is found in the cytoplasm. One of several proteins that assist in the late maturation steps of the functional core of the 30S ribosomal subunit. Associates with free 30S ribosomal subunits (but not with 30S subunits that are part of 70S ribosomes or polysomes). Required for efficient processing of 16S rRNA. May interact with the 5'-terminal helix region of 16S rRNA. This Mannheimia succiniciproducens (strain KCTC 0769BP / MBEL55E) protein is Ribosome-binding factor A.